A 367-amino-acid polypeptide reads, in one-letter code: Putative zinc metalloprotease mll0638 (367 aa).

H20 serves as a coordination point for Zn(2+). The active site involves E21. H24 lines the Zn(2+) pocket. 3 consecutive transmembrane segments (helical) span residues 108 to 130 (ATVV…VLFA), 291 to 313 (LGFE…LNLL), and 343 to 365 (MAYR…NDLF). Residues 121–196 (TIVVFSVLFA…ITFVMLRDGK (76 aa)) enclose the PDZ domain.

Belongs to the peptidase M50B family. Requires Zn(2+) as cofactor.

The protein localises to the cell inner membrane. The chain is Putative zinc metalloprotease mll0638 from Mesorhizobium japonicum (strain LMG 29417 / CECT 9101 / MAFF 303099) (Mesorhizobium loti (strain MAFF 303099)).